The primary structure comprises 597 residues: Cytosolic Fe-S cluster assembly factor nar1 (597 aa).

Cys-20 contacts [4Fe-4S] cluster. The interval 25–46 (ESLPQKESQSENPYEVTKEDKV) is disordered. Residues Cys-61, Cys-64, Cys-67, Cys-208, and Cys-263 each coordinate [4Fe-4S] cluster. The segment at 424 to 449 (RLPGAKPQAVSSSANRRQPMSRNAAP) is disordered. The segment covering 432–444 (AVSSSANRRQPMS) has biased composition (polar residues). Residues Cys-464 and Cys-468 each coordinate [4Fe-4S] cluster.

The protein belongs to the NARF family.

In terms of biological role, component of the cytosolic Fe/S protein assembly machinery. Required for maturation of extramitochondrial Fe/S proteins. May play a role in the transfer of pre-assembled Fe/S clusters to target apoproteins. This chain is Cytosolic Fe-S cluster assembly factor nar1 (nar1), found in Aspergillus fumigatus (strain ATCC MYA-4609 / CBS 101355 / FGSC A1100 / Af293) (Neosartorya fumigata).